Consider the following 351-residue polypeptide: Blue-sensitive opsin (351 aa).

The Extracellular portion of the chain corresponds to 1–40 (MKQVPEFHEDFYIPIPLDINNLSAYSPFLVPQDHLGNQGI). An N-linked (GlcNAc...) asparagine glycan is attached at Asn21. A helical membrane pass occupies residues 41–65 (FMAMSVFMFFIFIGGASINILTILC). The Cytoplasmic portion of the chain corresponds to 66-77 (TIQFKKLRSHLN). The helical transmembrane segment at 78 to 103 (YILVNLSIANLFVAIFGSPLSFYSFF) threads the bilayer. Topologically, residues 104–117 (NRYFIFGATACKIE) are extracellular. A disulfide bridge links Cys114 with Cys191. Residues 118–137 (GFLATLGGMVGLWSLAVVAF) form a helical membrane-spanning segment. At 138–156 (ERWLVICKPLGNFTFKTPH) the chain is on the cytoplasmic side. A helical membrane pass occupies residues 157–180 (AIAGCILPWISALAASLPPLFGWS). Topologically, residues 181-206 (RYIPEGLQCSCGPDWYTTNNKYNNES) are extracellular. Residues 207–234 (YVMFLFCFCFAVPFGTIVFCYGQLLITL) form a helical membrane-spanning segment. The Cytoplasmic segment spans residues 235 to 256 (KLAAKAQADSASTQKAEREVTK). A helical transmembrane segment spans residues 257-280 (MVVVMVLGFLVCWAPYASFSLWIV). Topologically, residues 281 to 288 (SHRGEEFD) are extracellular. The chain crosses the membrane as a helical span at residues 289-313 (LRMATIPSCLSKASTVYNPVIYVLM). Lys300 is modified (N6-(retinylidene)lysine). Over 314–351 (NKQFRSCMMKMVCGKNIEEDEASTSSQVTQVSSVAPEK) the chain is Cytoplasmic.

The protein belongs to the G-protein coupled receptor 1 family. Opsin subfamily. In terms of processing, phosphorylated on some or all of the serine and threonine residues present in the C-terminal region. In terms of tissue distribution, the color pigments are found in the cone photoreceptor cells.

The protein resides in the membrane. Its function is as follows. Visual pigments are the light-absorbing molecules that mediate vision. They consist of an apoprotein, opsin, covalently linked to cis-retinal. The sequence is that of Blue-sensitive opsin from Carassius auratus (Goldfish).